The sequence spans 181 residues: MKQSLEDTLLAAIRTIPDYPRPGILFRDITTLLGDARAFRRAVDELVHPYAGAKIDKIAGIEARGFILGGAIAHQLSSGFIPIRKKGKLPHETVRVAYSLEYGLDEMEMHIDAVSPGEKVILVDDLIATGGTAEAAVRLLRQMGAEIVAACFVIDLPDLGGRAKLEAEGVDVRTLVSFEGH.

The protein belongs to the purine/pyrimidine phosphoribosyltransferase family. In terms of assembly, homodimer.

The protein resides in the cytoplasm. The catalysed reaction is AMP + diphosphate = 5-phospho-alpha-D-ribose 1-diphosphate + adenine. It participates in purine metabolism; AMP biosynthesis via salvage pathway; AMP from adenine: step 1/1. In terms of biological role, catalyzes a salvage reaction resulting in the formation of AMP, that is energically less costly than de novo synthesis. This is Adenine phosphoribosyltransferase from Chelativorans sp. (strain BNC1).